The following is a 358-amino-acid chain: Valine dehydrogenase (358 aa).

K88 is a catalytic residue. 188 to 194 serves as a coordination point for NAD(+); sequence GVGKVGH.

It belongs to the Glu/Leu/Phe/Val dehydrogenases family. As to quaternary structure, homodimer.

It localises to the cytoplasm. The catalysed reaction is L-valine + NAD(+) + H2O = 3-methyl-2-oxobutanoate + NH4(+) + NADH + H(+). The protein operates within amino-acid degradation; L-valine degradation. In terms of biological role, oxidative deamination of branched-chain amino acids. The catabolism of valine is the major source of fatty acid precursors for macrolide biosynthesis and a vital source of antibiotic precursors. The chain is Valine dehydrogenase (vdh) from Streptomyces virginiae (Streptomyces cinnamonensis).